The sequence spans 228 residues: Thymidine kinase (228 aa).

23 to 30 (GNIGCGKS) lines the ATP pocket. E50 acts as the Proton acceptor in catalysis. 3 residues coordinate substrate: Y68, Q79, and F109. R157 contributes to the ATP binding site.

It belongs to the DCK/DGK family.

The catalysed reaction is thymidine + ATP = dTMP + ADP + H(+). The chain is Thymidine kinase (TK) from Ictaluridae (bullhead catfishes).